Reading from the N-terminus, the 142-residue chain is Large ribosomal subunit protein uL13 (142 aa).

Belongs to the universal ribosomal protein uL13 family. In terms of assembly, part of the 50S ribosomal subunit.

This protein is one of the early assembly proteins of the 50S ribosomal subunit, although it is not seen to bind rRNA by itself. It is important during the early stages of 50S assembly. In Ectopseudomonas mendocina (strain ymp) (Pseudomonas mendocina), this protein is Large ribosomal subunit protein uL13.